The chain runs to 95 residues: Large ribosomal subunit protein uL24c (95 aa).

The protein belongs to the universal ribosomal protein uL24 family. As to quaternary structure, part of the 50S ribosomal subunit.

Its subcellular location is the plastid. It localises to the chloroplast. Functionally, one of two assembly initiator proteins, it binds directly to the 5'-end of the 23S rRNA, where it nucleates assembly of the 50S subunit. The protein is Large ribosomal subunit protein uL24c (rpl24) of Porphyra purpurea (Red seaweed).